Here is a 291-residue protein sequence, read N- to C-terminus: uncharacterized protein (291 aa).

Positions 1–58 (MDLKWLQTFIAAAESESFREAAEHLYLTQPAVSQHMRKLEDELDMRLFLHSGRRVVLT) constitute an HTH lysR-type domain. Positions 18–37 (FREAAEHLYLTQPAVSQHMR) form a DNA-binding region, H-T-H motif.

It belongs to the LysR transcriptional regulatory family.

This is an uncharacterized protein from Bacillus subtilis (strain 168).